The chain runs to 924 residues: Aminopeptidase 2 (924 aa).

Positions 1–45 (MASNNTSQRSGFSSFFCRLKTYFCNHFLCLFVLSFFPLSFRRLCL) are cleaved as a signal peptide. Residues 46–57 (LCHLCEKSNLWL) constitute a propeptide that is removed on maturation. At Ser58 the chain carries N-acetylserine; partial. Asn92 carries N-linked (GlcNAc...) asparagine glycosylation. Glu194 is a binding site for substrate. Asn229 is a glycosylation site (N-linked (GlcNAc...) asparagine). 327 to 331 (GAMEN) contacts substrate. A Zn(2+)-binding site is contributed by His363. Catalysis depends on Glu364, which acts as the Proton acceptor. Zn(2+) contacts are provided by His367 and Glu386.

This sequence belongs to the peptidase M1 family. The cofactor is Zn(2+).

The protein localises to the secreted. The protein resides in the cell wall. With respect to regulation, inactivated by metal-chelating agents phenanthroline and EDTA. Inhibited by bestatin, an aminopeptidase inhibitor. Not inhibited by pepstatin A and PMSF, inhibitors of aspartic and the serine proteases, respectively. Not inhibited by carboxypeptidase inhibitor. In terms of biological role, metalloprotease that specifically hydrolyzes peptides with N-terminal alanine, arginine and leucine residues. This chain is Aminopeptidase 2 (APE2), found in Candida albicans (strain SC5314 / ATCC MYA-2876) (Yeast).